We begin with the raw amino-acid sequence, 88 residues long: Small ribosomal subunit protein uS15 (88 aa).

This sequence belongs to the universal ribosomal protein uS15 family. In terms of assembly, part of the 30S ribosomal subunit. Forms a bridge to the 50S subunit in the 70S ribosome, contacting the 23S rRNA.

In terms of biological role, one of the primary rRNA binding proteins, it binds directly to 16S rRNA where it helps nucleate assembly of the platform of the 30S subunit by binding and bridging several RNA helices of the 16S rRNA. Forms an intersubunit bridge (bridge B4) with the 23S rRNA of the 50S subunit in the ribosome. The sequence is that of Small ribosomal subunit protein uS15 from Francisella tularensis subsp. tularensis (strain FSC 198).